The primary structure comprises 310 residues: Methionyl-tRNA formyltransferase (310 aa).

111 to 114 contacts (6S)-5,6,7,8-tetrahydrofolate; sequence SLLP.

Belongs to the Fmt family.

The catalysed reaction is L-methionyl-tRNA(fMet) + (6R)-10-formyltetrahydrofolate = N-formyl-L-methionyl-tRNA(fMet) + (6S)-5,6,7,8-tetrahydrofolate + H(+). Functionally, attaches a formyl group to the free amino group of methionyl-tRNA(fMet). The formyl group appears to play a dual role in the initiator identity of N-formylmethionyl-tRNA by promoting its recognition by IF2 and preventing the misappropriation of this tRNA by the elongation apparatus. This Nitrobacter hamburgensis (strain DSM 10229 / NCIMB 13809 / X14) protein is Methionyl-tRNA formyltransferase.